The following is a 411-amino-acid chain: UPF0761 membrane protein PA14_51960 (411 aa).

6 consecutive transmembrane segments (helical) span residues 36-56 (LFAV…IPAF), 92-112 (HLTW…LVTI), 132-152 (FLLY…GFAV), 174-194 (LLGL…YSAV), 207-229 (GGVF…VSLF), and 244-264 (IFLL…VLVC).

This sequence belongs to the UPF0761 family.

The protein localises to the cell inner membrane. The chain is UPF0761 membrane protein PA14_51960 from Pseudomonas aeruginosa (strain UCBPP-PA14).